The primary structure comprises 501 residues: MSKQVRVRFAPSPTGPLHIGGVRTALFNYLFAKKHNGVFYLRIEDTDQTRFVPGAEAYIMEALEWLGISPEETVGKNEKFGPYRQSDRKDLYQKYADQLINSGWAYYAFDTPEALDAHRKQHEAEGKTFIYNHHNREKLDTSLVISAEETAKRIANGEHYVIRFKTPVDETLHLKDIIRGDVKFETNLLDDKVLFKSDGMPTYHLANIVDDHLMETSHVIRGEEWLPSMPLHVLLYRAFGWDAPEFAHLPLILKPVGNGKLSKRDGDKLGFPVFPLEWKTEEGVSSGYREKGFFPEAVVNFLALLGWNDGTDKELFSLEELVEAFDLNRVHKAGAKFDPEKNKWFNHQYLIKQNDADLAKSFSTILEEKGFSTPLEVTTRIVSLIKERAHFVSEFWDLTDFFFQAPSSYDEKASKNWKEETPALMKELISVLENIEDFTSANIETIVKEWLTKNEIGMGKVMQPFRLSLVGALKGPHLFDIVEIIGKEETVSRIQKAISAL.

A 'HIGH' region motif is present at residues 11-21 (PSPTGPLHIGG). The 'KMSKS' region signature appears at 260–264 (KLSKR). Lys-263 provides a ligand contact to ATP.

It belongs to the class-I aminoacyl-tRNA synthetase family. Glutamate--tRNA ligase type 1 subfamily. As to quaternary structure, monomer.

It is found in the cytoplasm. The catalysed reaction is tRNA(Glu) + L-glutamate + ATP = L-glutamyl-tRNA(Glu) + AMP + diphosphate. In terms of biological role, catalyzes the attachment of glutamate to tRNA(Glu) in a two-step reaction: glutamate is first activated by ATP to form Glu-AMP and then transferred to the acceptor end of tRNA(Glu). This is Glutamate--tRNA ligase from Flavobacterium johnsoniae (strain ATCC 17061 / DSM 2064 / JCM 8514 / BCRC 14874 / CCUG 350202 / NBRC 14942 / NCIMB 11054 / UW101) (Cytophaga johnsonae).